Here is a 419-residue protein sequence, read N- to C-terminus: Synaptic vesicle membrane protein VAT-1 homolog-like (419 aa).

Residues 1–25 show a composition bias toward basic and acidic residues; the sequence is MAKEGVEKAEETEQMIEKEAGKEPA. Disordered stretches follow at residues 1–36 and 384–419; these read MAKE…SHRL and PTPL…PFIQ. Residue Ser392 is modified to Phosphoserine. Phosphothreonine is present on residues Thr393 and Thr395. Phosphoserine is present on Ser396. Residues 397–407 are compositionally biased toward acidic residues; it reads EAGEEEEDHEG. Basic and acidic residues predominate over residues 408-419; the sequence is DSENKERMPFIQ.

Belongs to the zinc-containing alcohol dehydrogenase family. Quinone oxidoreductase subfamily. Detected in skin fibroblasts.

The sequence is that of Synaptic vesicle membrane protein VAT-1 homolog-like (VAT1L) from Homo sapiens (Human).